The primary structure comprises 412 residues: Imidazolonepropionase (412 aa).

Residues His76 and His78 each contribute to the Fe(3+) site. Zn(2+)-binding residues include His76 and His78. 3 residues coordinate 4-imidazolone-5-propanoate: Arg85, Tyr148, and His181. Tyr148 is a binding site for N-formimidoyl-L-glutamate. Residue His242 participates in Fe(3+) binding. His242 contributes to the Zn(2+) binding site. Glu245 is a 4-imidazolone-5-propanoate binding site. Asp317 serves as a coordination point for Fe(3+). Position 317 (Asp317) interacts with Zn(2+). Residues Asn319 and Gly321 each coordinate N-formimidoyl-L-glutamate. 4-imidazolone-5-propanoate is bound at residue Ser322.

The protein belongs to the metallo-dependent hydrolases superfamily. HutI family. The cofactor is Zn(2+). Fe(3+) serves as cofactor.

Its subcellular location is the cytoplasm. The enzyme catalyses 4-imidazolone-5-propanoate + H2O = N-formimidoyl-L-glutamate. The protein operates within amino-acid degradation; L-histidine degradation into L-glutamate; N-formimidoyl-L-glutamate from L-histidine: step 3/3. Its function is as follows. Catalyzes the hydrolytic cleavage of the carbon-nitrogen bond in imidazolone-5-propanoate to yield N-formimidoyl-L-glutamate. It is the third step in the universal histidine degradation pathway. This is Imidazolonepropionase from Staphylococcus aureus (strain bovine RF122 / ET3-1).